We begin with the raw amino-acid sequence, 110 residues long: Insulin-1 (110 aa).

Positions 1–24 (MALWMRFLPLLALLVLWEPKPAQA) are cleaved as a signal peptide. Intrachain disulfides connect cysteine 31-cysteine 96, cysteine 43-cysteine 109, and cysteine 95-cysteine 100. Residues 57–87 (EVEDPQVPQLELGGGPEAGDLQTLALEVARQ) constitute a propeptide, c peptide.

It belongs to the insulin family. As to quaternary structure, heterodimer of a B chain and an A chain linked by two disulfide bonds.

The protein localises to the secreted. Functionally, insulin decreases blood glucose concentration. It increases cell permeability to monosaccharides, amino acids and fatty acids. It accelerates glycolysis, the pentose phosphate cycle, and glycogen synthesis in liver. The sequence is that of Insulin-1 (Ins1) from Rattus norvegicus (Rat).